Here is a 474-residue protein sequence, read N- to C-terminus: Rhodanese-like domain-containing protein 7 (474 aa).

2 disordered regions span residues 20-68 (SSPP…SSLK) and 179-198 (VSPE…PLAA). Positions 53-68 (QSQPHKLSSSPSSSLK) are enriched in low complexity. Positions 245–368 (SDPETVVIDV…YLEEVPKTES (124 aa)) constitute a Rhodanese domain. Residue Cys328 is the Cysteine persulfide intermediate of the active site. The segment at 432-474 (RARARQTQFEEWGVIGGPDKGRRPATKPDSPRKKINAKLGSSI) is disordered.

In Arabidopsis thaliana (Mouse-ear cress), this protein is Rhodanese-like domain-containing protein 7 (STR7).